Reading from the N-terminus, the 617-residue chain is Dihydroxy-acid dehydratase (617 aa).

D81 serves as a coordination point for Mg(2+). C122 contributes to the [2Fe-2S] cluster binding site. D123 and K124 together coordinate Mg(2+). K124 is subject to N6-carboxylysine. C195 contacts [2Fe-2S] cluster. A Mg(2+)-binding site is contributed by E491. Catalysis depends on S517, which acts as the Proton acceptor.

Belongs to the IlvD/Edd family. In terms of assembly, homodimer. [2Fe-2S] cluster serves as cofactor. It depends on Mg(2+) as a cofactor.

The catalysed reaction is (2R)-2,3-dihydroxy-3-methylbutanoate = 3-methyl-2-oxobutanoate + H2O. It catalyses the reaction (2R,3R)-2,3-dihydroxy-3-methylpentanoate = (S)-3-methyl-2-oxopentanoate + H2O. It functions in the pathway amino-acid biosynthesis; L-isoleucine biosynthesis; L-isoleucine from 2-oxobutanoate: step 3/4. Its pathway is amino-acid biosynthesis; L-valine biosynthesis; L-valine from pyruvate: step 3/4. Functionally, functions in the biosynthesis of branched-chain amino acids. Catalyzes the dehydration of (2R,3R)-2,3-dihydroxy-3-methylpentanoate (2,3-dihydroxy-3-methylvalerate) into 2-oxo-3-methylpentanoate (2-oxo-3-methylvalerate) and of (2R)-2,3-dihydroxy-3-methylbutanoate (2,3-dihydroxyisovalerate) into 2-oxo-3-methylbutanoate (2-oxoisovalerate), the penultimate precursor to L-isoleucine and L-valine, respectively. The polypeptide is Dihydroxy-acid dehydratase (Rhodospirillum rubrum (strain ATCC 11170 / ATH 1.1.1 / DSM 467 / LMG 4362 / NCIMB 8255 / S1)).